A 273-amino-acid chain; its full sequence is NLP effector protein 10 (273 aa).

Positions 1–21 are cleaved as a signal peptide; that stretch reads MKLPTFLIGFVALLVTSNGSA. Residue asparagine 91 is glycosylated (N-linked (GlcNAc...) asparagine). The Conserved undecapeptide motif signature appears at 129–139; it reads AIMYAWYLPRA. A Conserved heptapeptide motif motif is present at residues 149 to 155; sequence GHRHYWL.

The protein belongs to the Necrosis inducing protein (NPP1) family.

The protein resides in the secreted. In terms of biological role, secreted effector that acts as a pathogen-associated molecular pattern (PAMP) recognized by the plant immune system. Seems not to induce necrosis in Nicotiana benthamiana leaves but significantly improves disease resistance of Arabidopsis thaliana to Hyaloperonospora arabidopsidis and causes an inhibition of plant growth which is typically associated with enhanced immunity when over-expressed in Arabidopsis. The protein is NLP effector protein 10 of Plasmopara viticola (Downy mildew of grapevine).